The chain runs to 275 residues: Trans-aconitate 2-methyltransferase (275 aa).

The protein belongs to the methyltransferase superfamily. Tam family.

Its subcellular location is the cytoplasm. It catalyses the reaction trans-aconitate + S-adenosyl-L-methionine = (E)-3-(methoxycarbonyl)pent-2-enedioate + S-adenosyl-L-homocysteine. Its function is as follows. Catalyzes the S-adenosylmethionine monomethyl esterification of trans-aconitate. This Pseudomonas aeruginosa (strain UCBPP-PA14) protein is Trans-aconitate 2-methyltransferase.